The chain runs to 54 residues: Apelin receptor early endogenous ligand (54 aa).

The N-terminal stretch at 1 to 25 (MRFQPLFWVFFIFAMSLLFITEEKS) is a signal peptide.

Belongs to the Elabela/Toddler family. As to quaternary structure, interacts with APLNR.

It localises to the secreted. The protein localises to the extracellular space. In terms of biological role, peptide hormone that functions as endogenous ligand for the G-protein-coupled apelin receptor (APLNR/APJ), that plays a role in the regulation of normal cardiovascular function and fluid homeostasis. Functions as a balanced agonist activating both G(i) protein pathway and beta-arrestin pathway of APLNR. Downstream G proteins activation, apelin can inhibit cAMP production and activate key intracellular effectors such as ERKs. On the other hand, APLNR activation induces beta-arrestin recruitment to the membrane leading to desensitization and internalization of the receptor. Required for mesendodermal differentiation, blood vessels formation and heart morphogenesis during early development and for adult cardiovascular homeostasis. Acts as a motogen by promoting mesendodermal cell migration during gastrulation by binding and activating APLNR. Acts as an early embryonic regulator of cellular movement with a role in migration and development of cardiac progenitor cells. May act as a chemoattractant for the activation of angioblast migration toward the embryonic midline, i.e. the position of the future vessel formation, during vasculogenesis. Positively regulates sinus venosus (SV)-derived endothelial cells migration into the developing heart to promote coronary blood vessel sprouting. Plays a role in placental vascular development; promotes placental trophoblast invasion and spiral artery remodeling in the uterus. Involved in the regulation of maternal cardiovascular homeostasis to prevent gestational hypertension and for potent cardioprotective functions during heart failure. Mediates myocardial contractility in an ERK1/2-dependent manner. The chain is Apelin receptor early endogenous ligand from Rattus norvegicus (Rat).